A 415-amino-acid chain; its full sequence is Serine hydroxymethyltransferase 3 (415 aa).

Residues Leu122 and 126 to 128 (GHL) contribute to the (6S)-5,6,7,8-tetrahydrofolate site. Lys230 is modified (N6-(pyridoxal phosphate)lysine).

This sequence belongs to the SHMT family. In terms of assembly, homodimer. The cofactor is pyridoxal 5'-phosphate.

The protein localises to the cytoplasm. It carries out the reaction (6R)-5,10-methylene-5,6,7,8-tetrahydrofolate + glycine + H2O = (6S)-5,6,7,8-tetrahydrofolate + L-serine. It participates in one-carbon metabolism; tetrahydrofolate interconversion. The protein operates within amino-acid biosynthesis; glycine biosynthesis; glycine from L-serine: step 1/1. Functionally, catalyzes the reversible interconversion of serine and glycine with tetrahydrofolate (THF) serving as the one-carbon carrier. This reaction serves as the major source of one-carbon groups required for the biosynthesis of purines, thymidylate, methionine, and other important biomolecules. Also exhibits THF-independent aldolase activity toward beta-hydroxyamino acids, producing glycine and aldehydes, via a retro-aldol mechanism. This is Serine hydroxymethyltransferase 3 from Burkholderia lata (strain ATCC 17760 / DSM 23089 / LMG 22485 / NCIMB 9086 / R18194 / 383).